The following is a 357-amino-acid chain: EGF-like domain-containing protein 2 (357 aa).

The signal sequence occupies residues 1 to 20; it reads MPPSLSHLFLLSTFASLALC. EGF-like domains follow at residues 21–55 and 61–93; these read SFYCKNPGYPCLNGGTCLYNGECNCTSGFRGFNCG and ISAACTVECHNKGICFNGDKCYCTKDYMGPTCQ. 6 disulfide bridges follow: C24-C37, C31-C43, C45-C54, C65-C75, C69-C81, and C83-C92.

As to expression, prismatic layer of shell (at protein level). Expressed primarily in the mantle with highest level in the mantle edge and lower level in the mantle pallium.

The protein localises to the secreted. This is EGF-like domain-containing protein 2 from Pinctada maxima (Silver-lipped pearl oyster).